The following is a 313-amino-acid chain: MANSTTVTEFILLGLSDACELQVLIFLGFLLTYFLILLGNFLIIFITLVDRRLYTPMYYFLRNFAMLEIWFTSVIFPKMLTNIITGHKTISLLGCFLQAFLYFFLGTTEFFLLAVMSFDRYVAICNPLRYATIMSKRVCVQLVFCSWMSGLLLIIVPSSIVFQQPFCGPNIINHFFCDNFPLMELICADTSLVEFLGFVIANFSLLGTLAVTATCYGHILYTILHIPSAKERKKAFSTCSSHIIVVSLFYGSCIFMYVRSGKNGQGEDHNKVVALLNTVVTPTLNPFIYTLRNKQVKQVFREHVSKFQKFSQT.

The N-linked (GlcNAc...) asparagine glycan is linked to asparagine 3. Transmembrane regions (helical) follow at residues 25-45 (IFLGFLLTYFLILLGNFLIIF), 64-84 (FAMLEIWFTSVIFPKMLTNII), 96-116 (FLQAFLYFFLGTTEFFLLAVM), 142-162 (LVFCSWMSGLLLIIVPSSIVF), 192-212 (LVEFLGFVIANFSLLGTLAVT), 238-258 (TCSSHIIVVSLFYGSCIFMYV), and 271-291 (KVVALLNTVVTPTLNPFIYTL). Cysteine 95 and cysteine 177 are disulfide-bonded.

The protein belongs to the G-protein coupled receptor 1 family.

Its subcellular location is the cell membrane. Odorant receptor. Activated by (-)-citronellal and to a lesser extent by (+)-citronellal. Not activated by carvone or limonene. The sequence is that of Olfactory receptor 6E1 from Mus musculus (Mouse).